The chain runs to 400 residues: Chalcone synthase WHP1 (400 aa).

Cys-167 is an active-site residue.

It belongs to the thiolase-like superfamily. Chalcone/stilbene synthases family.

It catalyses the reaction (E)-4-coumaroyl-CoA + 3 malonyl-CoA + 3 H(+) = 2',4,4',6'-tetrahydroxychalcone + 3 CO2 + 4 CoA. The protein operates within secondary metabolite biosynthesis; flavonoid biosynthesis. The primary product of this enzyme is 4,2',4',6'-tetrahydroxychalcone (also termed naringenin-chalcone or chalcone) which can under specific conditions spontaneously isomerize into naringenin. The polypeptide is Chalcone synthase WHP1 (WHP1) (Zea mays (Maize)).